The primary structure comprises 411 residues: Serine--tRNA ligase (411 aa).

226 to 228 lines the L-serine pocket; the sequence is TSE. 257–259 contacts ATP; it reads RKE. Glutamate 280 is an L-serine binding site. 344 to 347 is a binding site for ATP; the sequence is EISS. Residue serine 379 coordinates L-serine.

It belongs to the class-II aminoacyl-tRNA synthetase family. Type-1 seryl-tRNA synthetase subfamily. In terms of assembly, homodimer. The tRNA molecule binds across the dimer.

The protein localises to the cytoplasm. The enzyme catalyses tRNA(Ser) + L-serine + ATP = L-seryl-tRNA(Ser) + AMP + diphosphate + H(+). It carries out the reaction tRNA(Sec) + L-serine + ATP = L-seryl-tRNA(Sec) + AMP + diphosphate + H(+). It functions in the pathway aminoacyl-tRNA biosynthesis; selenocysteinyl-tRNA(Sec) biosynthesis; L-seryl-tRNA(Sec) from L-serine and tRNA(Sec): step 1/1. In terms of biological role, catalyzes the attachment of serine to tRNA(Ser). Is also able to aminoacylate tRNA(Sec) with serine, to form the misacylated tRNA L-seryl-tRNA(Sec), which will be further converted into selenocysteinyl-tRNA(Sec). The chain is Serine--tRNA ligase from Campylobacter jejuni subsp. doylei (strain ATCC BAA-1458 / RM4099 / 269.97).